The primary structure comprises 165 residues: Protein SprT (165 aa).

Residues 22-163 (LAQANLKLDR…RCVHCGEPLV (142 aa)) enclose the SprT-like domain. His78 serves as a coordination point for Zn(2+). Glu79 is an active-site residue. His82 contributes to the Zn(2+) binding site.

The protein belongs to the SprT family. Zn(2+) serves as cofactor.

The protein localises to the cytoplasm. The chain is Protein SprT from Salmonella paratyphi A (strain ATCC 9150 / SARB42).